The chain runs to 334 residues: Nucleoid-associated protein YPK_2796 (334 aa).

This sequence belongs to the YejK family.

The protein resides in the cytoplasm. It localises to the nucleoid. This Yersinia pseudotuberculosis serotype O:3 (strain YPIII) protein is Nucleoid-associated protein YPK_2796.